Reading from the N-terminus, the 458-residue chain is Argininosuccinate lyase (458 aa).

This sequence belongs to the lyase 1 family. Argininosuccinate lyase subfamily.

It localises to the cytoplasm. The catalysed reaction is 2-(N(omega)-L-arginino)succinate = fumarate + L-arginine. The protein operates within amino-acid biosynthesis; L-arginine biosynthesis; L-arginine from L-ornithine and carbamoyl phosphate: step 3/3. The sequence is that of Argininosuccinate lyase from Geobacter metallireducens (strain ATCC 53774 / DSM 7210 / GS-15).